The primary structure comprises 326 residues: MVFSNSNASVSLFRLVALVATLSHLVFTFVDAHGYVTFPASRAYMCKQGQAKNCGEIQYEPQSVEAPKGLPFARKGDGQLCSAGLGQFSQLDRQGPSAWPTTKASGVHSFSWTFTAQHATTDFKYFITKANWDSSKTSGLSASDLESDPFLTVSMNGKAPPRTMNHDLSKAMPSRSGYHVVYAVWTVDNTANAFYQCLDLDFGGGNSSSSSSSSNSSATSTTGSSSAASAATSSTTSSSVSESGTASTASGSGSDDDSSSSGDSSNGSSSDNNGGSSGSTTMPKSQIAQSGACRMKKRRRSPNASVLAARGDYRRHKSQMRRDRQG.

The N-terminal stretch at 1–32 (MVFSNSNASVSLFRLVALVATLSHLVFTFVDA) is a signal peptide. H33 and H118 together coordinate Cu(2+). In terms of domain architecture, Chitin-binding type-4 spans 33 to 200 (HGYVTFPASR…ANAFYQCLDL (168 aa)). C81 and C197 are disulfide-bonded. Residues N206, N215, N266, and N303 are each glycosylated (N-linked (GlcNAc...) asparagine). The segment at 206-326 (NSSSSSSSSN…KSQMRRDRQG (121 aa)) is disordered. Residues 207 to 281 (SSSSSSSSNS…NNGGSSGSTT (75 aa)) are compositionally biased toward low complexity.

The protein belongs to the polysaccharide monooxygenase AA10 family. Cu(2+) serves as cofactor.

The protein resides in the secreted. Lytic polysaccharide monooxygenase (LPMO) that oxidatively cleaves alpha- and beta-chitin with C1 regioselectivity. Catalysis by LPMOs requires the reduction of the active-site copper from Cu(II) to Cu(I) by a reducing agent and H(2)O(2) or O(2) as a cosubstrate. Exhibits enzymatic activity on U.maydis fungal cell wall chitin and Boosts chitin hydrolysis by chitinase GH18A. The polypeptide is AA10 family lytic polysaccharide monooxygenase C (Mycosarcoma maydis (Corn smut fungus)).